Here is a 160-residue protein sequence, read N- to C-terminus: Ribosomal RNA large subunit methyltransferase H (160 aa).

Positions 76 and 108 each coordinate S-adenosyl-L-methionine.

The protein belongs to the RNA methyltransferase RlmH family. Homodimer.

It is found in the cytoplasm. The catalysed reaction is pseudouridine(1915) in 23S rRNA + S-adenosyl-L-methionine = N(3)-methylpseudouridine(1915) in 23S rRNA + S-adenosyl-L-homocysteine + H(+). Functionally, specifically methylates the pseudouridine at position 1915 (m3Psi1915) in 23S rRNA. The chain is Ribosomal RNA large subunit methyltransferase H from Nitrobacter winogradskyi (strain ATCC 25391 / DSM 10237 / CIP 104748 / NCIMB 11846 / Nb-255).